The following is a 218-amino-acid chain: Pyridoxine/pyridoxamine 5'-phosphate oxidase (218 aa).

Substrate-binding positions include 14–17 and lysine 72; that span reads RREY. FMN-binding positions include 67–72, 82–83, arginine 88, lysine 89, and glutamine 111; these read RIVLLK and YT. The substrate site is built by tyrosine 129, arginine 133, and serine 137. FMN contacts are provided by residues 146 to 147 and tryptophan 191; that span reads QS. 197–199 is a binding site for substrate; sequence RLH. Arginine 201 is a binding site for FMN.

It belongs to the pyridoxamine 5'-phosphate oxidase family. Homodimer. Requires FMN as cofactor.

It carries out the reaction pyridoxamine 5'-phosphate + O2 + H2O = pyridoxal 5'-phosphate + H2O2 + NH4(+). The enzyme catalyses pyridoxine 5'-phosphate + O2 = pyridoxal 5'-phosphate + H2O2. It functions in the pathway cofactor metabolism; pyridoxal 5'-phosphate salvage; pyridoxal 5'-phosphate from pyridoxamine 5'-phosphate: step 1/1. Its pathway is cofactor metabolism; pyridoxal 5'-phosphate salvage; pyridoxal 5'-phosphate from pyridoxine 5'-phosphate: step 1/1. Functionally, catalyzes the oxidation of either pyridoxine 5'-phosphate (PNP) or pyridoxamine 5'-phosphate (PMP) into pyridoxal 5'-phosphate (PLP). The polypeptide is Pyridoxine/pyridoxamine 5'-phosphate oxidase (Escherichia coli (strain 55989 / EAEC)).